Reading from the N-terminus, the 135-residue chain is Holo-[acyl-carrier-protein] synthase (135 aa).

Aspartate 8 and glutamate 57 together coordinate Mg(2+).

Belongs to the P-Pant transferase superfamily. AcpS family. Mg(2+) is required as a cofactor.

It is found in the cytoplasm. It carries out the reaction apo-[ACP] + CoA = holo-[ACP] + adenosine 3',5'-bisphosphate + H(+). Its function is as follows. Transfers the 4'-phosphopantetheine moiety from coenzyme A to a Ser of acyl-carrier-protein. This Xanthobacter autotrophicus (strain ATCC BAA-1158 / Py2) protein is Holo-[acyl-carrier-protein] synthase.